A 777-amino-acid chain; its full sequence is Santalene and bergamotene synthase, chloroplastic (777 aa).

The N-terminal 36 residues, 1 to 36 (MIVGYRSTIITLSHPKLGNGKTISSNAIFQRSCRVR), are a transit peptide targeting the chloroplast. Mg(2+) contacts are provided by Asp-530 and Asp-534. Positions 530 to 534 (DDQFD) match the DDXXD motif motif.

It belongs to the terpene synthase family. Tpse subfamily. Mg(2+) serves as cofactor. The cofactor is Mn(2+).

Its subcellular location is the plastid. The protein localises to the chloroplast. It catalyses the reaction (2Z,6Z)-farnesyl diphosphate = (+)-alpha-santalene + diphosphate. It carries out the reaction (2Z,6Z)-farnesyl diphosphate = (+)-endo-beta-bergamotene + diphosphate. The enzyme catalyses (2Z,6Z)-farnesyl diphosphate = (1S,5S,6S)-alpha-bergamotene + diphosphate. Its function is as follows. (2Z,6Z)-farnesyl diphosphate cyclizing enzyme. Produces (+)-alpha-santalene, (+)-endo-beta-bergamotene, (-)-endo-alpha-bergamotene, and at lower amounts, (-)exo-alpha-bergamotene and (+)-epi-beta-santalene. Not able to use geranyl diphosphate, E,E-farnesyl diphosphate or E,E,E-geranylgeranyl diphosphate as substrates, but able to use Neryl diphosphate to make the monoterpene terpineol. The sequence is that of Santalene and bergamotene synthase, chloroplastic (SBS) from Solanum habrochaites (Wild tomato).